The sequence spans 439 residues: Homeobox protein ceh-32 (439 aa).

A DNA-binding region (homeobox) is located at residues 183 to 243 (WDGEQKTHCF…KNRRQRDRAA (61 aa)). 3 disordered regions span residues 253–293 (GVEL…SHIP), 344–365 (EEEN…KKRS), and 379–439 (VSPS…SQSE). 2 stretches are compositionally biased toward acidic residues: residues 264–274 (SDSDDDFEDSM) and 344–358 (EEEN…EADI). The span at 379–392 (VSPSQCSPCSNESL) shows a compositional bias: polar residues. A compositionally biased stretch (basic and acidic residues) spans 398–428 (VKTEEVKKEDDEAAEEDSRSVKSETSEDPKH).

The protein belongs to the SIX/Sine oculis homeobox family. As to quaternary structure, interacts with gmn-1. In terms of tissue distribution, expressed in the posterior gonad. Expressed in some cells in the head that are probably neurons. Expressed in the dorsal and ventral neuron RMD pair and the inner labial neuron class IL1. Not expressed in BAG neurons.

The protein resides in the nucleus. In terms of biological role, transcription factor which binds a motif with the core sequence 5'-GTATCA-3'. Plays a role in head morphogenesis. Involved in embryonic development. Required for cell specification of the RIA interneurons. May cooperate with the transcription factor vab-3 and phosphatase eya-1 to repress transcription factor ets-5 expression in non BAG neuronal cells. This Caenorhabditis elegans protein is Homeobox protein ceh-32.